We begin with the raw amino-acid sequence, 424 residues long: Zinc metalloproteinase-disintegrin-like brevilysin H2b (424 aa).

Gln-1 bears the Pyrrolidone carboxylic acid mark. Residues 9 to 207 (RYVKLAIVAD…YKPQCILNEP (199 aa)) form the Peptidase M12B domain. Residue Asn-69 is glycosylated (N-linked (GlcNAc...) asparagine). Asp-96 contributes to the Ca(2+) binding site. 3 disulfides stabilise this stretch: Cys-120-Cys-202, Cys-164-Cys-186, and Cys-166-Cys-169. Zn(2+) is bound at residue His-145. Glu-146 is a catalytic residue. 2 residues coordinate Zn(2+): His-149 and His-155. N-linked (GlcNAc...) asparagine glycosylation is present at Asn-185. The Ca(2+) site is built by Cys-202, Asn-205, Val-217, Asn-220, Leu-222, Glu-224, Glu-227, and Asp-230. In terms of domain architecture, Disintegrin spans 215–301 (PPVCGNELLE…DCPTDDLQRN (87 aa)). 14 disulfides stabilise this stretch: Cys-218-Cys-247, Cys-229-Cys-242, Cys-231-Cys-237, Cys-241-Cys-264, Cys-255-Cys-261, Cys-260-Cys-286, Cys-273-Cys-293, Cys-280-Cys-312, Cys-305-Cys-317, Cys-324-Cys-374, Cys-339-Cys-385, Cys-352-Cys-362, Cys-369-Cys-411, and Cys-405-Cys-417. The D/ECD-tripeptide motif lies at 279 to 281 (DCD). Asp-281, Glu-284, and Asp-296 together coordinate Ca(2+).

It belongs to the venom metalloproteinase (M12B) family. P-III subfamily. P-IIIa sub-subfamily. In terms of assembly, monomer. Requires Zn(2+) as cofactor. Post-translationally, glycosylated. Expressed by the venom gland.

It is found in the secreted. With respect to regulation, its proteolytic activity is inhibited by EDTA, TPEN, 1,10-phenanthroline, and some thiol compounds, but is enhanced by alkaline earth metal ions (Mg2+, Ca2+, Sr2+, and Ba2+). Its activity is not modulated by urea (4 M). Non-hemorrhagic metalloproteinase that degrades fibrinogen. The alpha chain (FGA) is rapidly degraded, the beta chain (FGB) is degraded very slowly, while the gamma chain is left intact. Shows a prefential cleavage at X-Leu bonds. Cleaves insulin B chain at '29-His-|-Leu-30', '33-Ser-|-His-34', '38-Ala-|-Leu-39' and '40-Tyr-|-Leu-41' bonds. The polypeptide is Zinc metalloproteinase-disintegrin-like brevilysin H2b (Gloydius brevicauda (Korean slamosa snake)).